Reading from the N-terminus, the 198-residue chain is Recombination protein RecR (198 aa).

Residues 57 to 72 form a C4-type zinc finger; that stretch reads CSVCNNITDLDPCHIC. Residues 80-175 enclose the Toprim domain; it reads SIICVVQEPR…RVTRIAHGLP (96 aa).

This sequence belongs to the RecR family.

May play a role in DNA repair. It seems to be involved in an RecBC-independent recombinational process of DNA repair. It may act with RecF and RecO. The chain is Recombination protein RecR from Brevibacillus brevis (strain 47 / JCM 6285 / NBRC 100599).